The sequence spans 188 residues: Peptidyl-tRNA hydrolase (188 aa).

Phe15 is a tRNA binding site. Residue His20 is the Proton acceptor of the active site. Residues Tyr64, Asn66, and Asn112 each coordinate tRNA.

Belongs to the PTH family. Monomer.

The protein localises to the cytoplasm. It carries out the reaction an N-acyl-L-alpha-aminoacyl-tRNA + H2O = an N-acyl-L-amino acid + a tRNA + H(+). In terms of biological role, hydrolyzes ribosome-free peptidyl-tRNAs (with 1 or more amino acids incorporated), which drop off the ribosome during protein synthesis, or as a result of ribosome stalling. Its function is as follows. Catalyzes the release of premature peptidyl moieties from peptidyl-tRNA molecules trapped in stalled 50S ribosomal subunits, and thus maintains levels of free tRNAs and 50S ribosomes. The sequence is that of Peptidyl-tRNA hydrolase from Borrelia duttonii (strain Ly).